The primary structure comprises 384 residues: 8-amino-7-oxononanoate synthase (384 aa).

R21 lines the substrate pocket. A pyridoxal 5'-phosphate-binding site is contributed by 108-109; sequence GF. H133 contributes to the substrate binding site. Pyridoxal 5'-phosphate is bound by residues S179, H207, and T233. N6-(pyridoxal phosphate)lysine is present on K236. A substrate-binding site is contributed by T352.

It belongs to the class-II pyridoxal-phosphate-dependent aminotransferase family. BioF subfamily. As to quaternary structure, homodimer. Pyridoxal 5'-phosphate serves as cofactor.

It catalyses the reaction 6-carboxyhexanoyl-[ACP] + L-alanine + H(+) = (8S)-8-amino-7-oxononanoate + holo-[ACP] + CO2. It functions in the pathway cofactor biosynthesis; biotin biosynthesis. Catalyzes the decarboxylative condensation of pimeloyl-[acyl-carrier protein] and L-alanine to produce 8-amino-7-oxononanoate (AON), [acyl-carrier protein], and carbon dioxide. The polypeptide is 8-amino-7-oxononanoate synthase (Escherichia coli O8 (strain IAI1)).